The sequence spans 13477 residues: Mucin-3B (13477 aa).

The first 21 residues, 1–21 (MQLLGLLSILWMLKSSPGATG), serve as a signal peptide directing secretion. Positions 219–234 (TISSTTRTTERTPLPT) are enriched in low complexity. 106 disordered regions span residues 219–243 (TISS…TMSP), 327–347 (TRST…TVTD), 360–383 (GTLS…TPMT), 513–559 (SMTT…PSTL), 622–643 (ATTP…STPS), 815–839 (TTTN…TGTG), 923–968 (TSQT…STTE), 1154–1179 (PSMS…TSTL), 1480–1511 (SPTV…STEN), 1529–1601 (SISA…FPET), 1619–1638 (MTST…VTSM), 1692–1714 (TTST…TDSM), 1944–1968 (TTSA…TFTS), 2064–2123 (TPNA…IAKS), 2170–2197 (STSM…SGGI), 2275–2308 (SSSM…AEST), 2442–2462 (RSTP…VKGS), 2476–2497 (LSME…TATT), 2509–2537 (SHST…GPPT), 2591–2610 (SAMS…TETS), 2672–2717 (TSTL…FSSS), 2812–2832 (TTIT…STST), 2845–2867 (TMTE…STTE), 2922–2947 (SRIP…SVGI), 3074–3109 (ETPS…TPDI), 3309–3395 (TTSH…NSNS), 3420–3481 (ITTT…SHST), 3545–3565 (STTS…STPS), 3654–3727 (SITT…STTA), 3740–3812 (ITTI…TTAE), 4014–4047 (TETT…SIAT), 4067–4106 (TSNS…HSTP), 4182–4249 (TTET…SSIT), 4269–4313 (NSTS…PSFT), 4510–4530 (SHST…SHST), 4557–4617 (TETT…STSS), 4630–4651 (YSPS…STPS), 4802–4830 (TSSF…TATG), 4953–4986 (HSLP…KTIS), 5128–5203 (YTSS…ITTT), 5455–5486 (ITNT…PSFT), 5627–5680 (TTKT…ATSK), 5834–5908 (TTSY…HSPP), 5957–5977 (STPS…SSPS), 5990–6017 (HSTA…SSIT), 6030–6080 (TSSI…PPIF), 6120–6150 (TTET…SFTS), 6172–6197 (TEST…HTPP), 6456–6481 (TETP…HSTP), 6541–6598 (TKTT…TSTS), 6846–6867 (TTGT…TKTT), 6946–6971 (ITTT…RTSH), 6999–7021 (TTES…ETRS), 7067–7093 (TTET…HSPP), 7170–7206 (TETA…TTGI), 7225–7244 (SHST…ISHS), 7299–7329 (FTSS…TSHS), 7400–7433 (SYTS…HRTP), 7476–7532 (TETI…TTST), 7578–7600 (TGTS…TTSH), 7731–7766 (TEIT…ATSK), 7922–7996 (SHST…PPIF), 8036–8066 (TTET…SFTS), 8088–8113 (TEST…HTPP), 8372–8397 (TETP…HSTP), 8457–8514 (TKTT…TSTS), 8762–8783 (TTGT…TKTT), 8862–8887 (ITTT…RTSH), 8915–8941 (TTES…HSPP), 8983–9009 (TTET…HSPP), 9052–9122 (AETT…TTGI), 9141–9160 (SHST…ISHS), 9215–9240 (FTSS…TSTE), 9335–9366 (TSSI…HRTP), 9409–9465 (TETI…TTST), 9566–9589 (SHST…NPSL), 9612–9674 (TTET…PPSF), 9734–9760 (TTSH…SSFT), 9828–9859 (TSSI…HSTP), 9883–9908 (TTTE…RSHS), 9921–9973 (TTSH…SKTI), 10076–10099 (SDST…SPSF), 10120–10166 (ITTT…TVPS), 10189–10285 (ITTE…SPLS), 10389–10425 (TSSI…LSSA), 10462–10481 (TTKT…TSTK), 10501–10537 (SHSS…TSTS), 10640–10660 (TTSF…TPSF), 10750–10828 (TTTE…QRSP), 10887–11032 (TTET…SPSS), 11044–11065 (SHST…HSTP), 11276–11317 (TGTE…SPSH), 11446–11482 (STTA…ITTT), 11566–11697 (TTET…PGFS), 11754–11779 (TKTT…HSTP), 11818–11949 (SIAT…HSPP), 12067–12103 (TSSF…STPV), 12186–12220 (PSYT…HSTP), 12280–12323 (TETT…STPI), 12364–12452 (TTET…TTET), 12468–12578 (EMTS…NTPS), 12616–12639 (FTTA…DIPT), 12681–12700 (SSPS…TSPT), 12785–12805 (IPST…LQTS), 12985–13011 (TSSM…TVPT), and 13052–13086 (SLPT…TPTT). Low complexity-rich tracts occupy residues 513–538 (SMTT…LSST) and 547–559 (TSHT…PSTL). A compositionally biased stretch (low complexity) spans 1620–1638 (TSTPPITSSVTPTNTVTSM). The span at 1944–1956 (TTSATMEPPSSSV) shows a compositional bias: polar residues. The segment covering 1957-1968 (AATDTGQTTFTS) has biased composition (low complexity). Positions 2066–2091 (NASSMTTSETTYPNSPTGPVTNSMSK) are enriched in polar residues. The segment covering 2096 to 2107 (ASMTQTSSTATS) has biased composition (low complexity). Polar residues predominate over residues 2113–2123 (PSGSTTEIAKS). The span at 2170–2185 (STSMTPSTVSTSIPTS) shows a compositional bias: low complexity. The span at 2186 to 2195 (QPKTVNSSSG) shows a compositional bias: polar residues. Low complexity-rich tracts occupy residues 2292–2308 (SSPP…AEST) and 2442–2458 (RSTP…PTST). Over residues 2591–2603 (SAMSTSDIPSSPS) the composition is skewed to low complexity. Low complexity-rich tracts occupy residues 2929–2944 (STDI…TPSS) and 3074–3097 (ETPS…TATS). Positions 3098–3109 (PETNTLTPTPDI) are enriched in polar residues. Low complexity predominate over residues 3309-3359 (TTSHSTPSFTSPIATTKTSSHSSPSFTSSIATLETTSHSTPSFTSSITTNS). Residues 3360 to 3370 (HSTPRFSSSIA) show a composition bias toward polar residues. Residues 3371–3385 (TRETTSHSTSSFTPS) show a composition bias toward low complexity. The segment covering 3386-3395 (IATTKTNSNS) has biased composition (polar residues). Positions 3420-3452 (ITTTETTSHSTPSFTSSMATTKTTSHSTPSFTS) are enriched in low complexity. Over residues 3453–3462 (PIATRETTSH) the composition is skewed to polar residues. Residues 3463–3481 (STPSFTSLITTTKTTSHST) show a composition bias toward low complexity. Positions 3740 to 3749 (ITTIETPSHG) are enriched in polar residues. Over residues 3750–3785 (TPSFTSSITSTETTSHSSPSFISSITTTEITSHSTP) the composition is skewed to low complexity. Over residues 3786–3812 (RFTSSITTMETPSHSTPNFTSSITTAE) the composition is skewed to polar residues. Low complexity-rich tracts occupy residues 4020-4042 (STPS…PSFT) and 4067-4096 (TSNS…SSMT). Residues 4097-4106 (ATETTSHSTP) show a composition bias toward polar residues. 2 stretches are compositionally biased toward low complexity: residues 4182–4228 (TTET…PSFT) and 4237–4249 (TSHS…SSIT). Low complexity predominate over residues 4557–4574 (TETTSNSSPSFTSSITNT). The segment covering 4575-4601 (KTTSYSPPGFTSSIPATETTSRSPPGF) has biased composition (polar residues). Low complexity predominate over residues 4602 to 4617 (TSSITTTETTSHSTSS). The span at 4802–4827 (TSSFTSSITSTETTSHSTPSLTSSIT) shows a compositional bias: low complexity. Low complexity predominate over residues 5137 to 5158 (TPSHITPSFTSTITTSESTSHS). The span at 5159 to 5170 (NPSLTSAITTTE) shows a compositional bias: polar residues. Low complexity-rich tracts occupy residues 5174–5203 (HSPP…ITTT) and 5458–5486 (TEST…PSFT). Over residues 5834 to 5858 (TTSYSTPSITSSITTTERTSHSTPS) the composition is skewed to low complexity. The span at 5859–5874 (YTSSIATRETPSHTVP) shows a compositional bias: polar residues. A compositionally biased stretch (low complexity) spans 5875-5889 (SFTSSITTTESTSHS). Over residues 5890–5901 (NPSLTSAITTTE) the composition is skewed to polar residues. Low complexity predominate over residues 6045–6059 (SFTSSITTTDSTSHS). Residues 6060-6071 (NPSLTSAITTTE) are compositionally biased toward polar residues. Residues 6172 to 6185 (TESTSHSTPSFTSS) show a composition bias toward low complexity. Residues 6186 to 6197 (IATTETTSHTPP) show a composition bias toward polar residues. Over residues 6456–6475 (TETPSHSTPSFPSSITTTQS) the composition is skewed to low complexity. A compositionally biased stretch (polar residues) spans 6852-6867 (HNTLGLSSSVDTTKTT). Residues 6946-6965 (ITTTETTSHSTPSITSSVTT) show a composition bias toward low complexity. Positions 6999–7018 (TTESTSHSNPSLTSAITTTE) are enriched in polar residues. Low complexity predominate over residues 7172–7206 (TASHSNPSSTSSITTTESTSHSPPRSTSAIATTGI). Composition is skewed to low complexity over residues 7300 to 7329 (TSSI…TSHS) and 7400 to 7427 (SYTS…STET). Polar residues predominate over residues 7476–7491 (TETISHSPPSFTSLTN). The segment covering 7492 to 7532 (STETTSHSPPSFTSSSTTTETPSHSTPGFSSSIATSKTTST) has biased composition (low complexity). Composition is skewed to low complexity over residues 7734–7766 (TSHS…ATSK) and 7922–7944 (SHST…STPS). The span at 7945-7987 (YTSSIATSETPSHTVPSFTSLITTTDSTSHSNPSLTSAITTTE) shows a compositional bias: polar residues. Positions 8088 to 8101 (TESTSHSTPSFTSS) are enriched in low complexity. Positions 8102–8113 (IATTETTSHTPP) are enriched in polar residues. Positions 8372–8391 (TETPSHSTPSFPSSITTTQS) are enriched in low complexity. Over residues 8768–8783 (HNTLGLSSSVDTTKTT) the composition is skewed to polar residues. Residues 8862-8881 (ITTTETTSHSTPSITSSVTT) show a composition bias toward low complexity. The segment covering 8915 to 8934 (TTESTSHSNPSLTSAITTTE) has biased composition (polar residues). Low complexity-rich tracts occupy residues 9067-9081 (PTTE…SFTS) and 9088-9122 (TASH…TTGI). The segment covering 9335 to 9360 (TSSITTTETPSHSSPSFPSSITSTET) has biased composition (low complexity). Over residues 9409 to 9424 (TETISHSPPSFTSLTN) the composition is skewed to polar residues. Composition is skewed to low complexity over residues 9425-9465 (STET…TTST), 9566-9585 (SHST…TSHS), and 9612-9624 (TTET…PSFT). Over residues 9625 to 9661 (SSIATAETTSHSPPSFTSLITTSETPSHSNPSFTSLI) the composition is skewed to polar residues. Positions 9662 to 9674 (TTTESTSHSPPSF) are enriched in low complexity. Polar residues-rich tracts occupy residues 9892-9903 (NPSLTSAITNTE) and 9921-9933 (TTSH…TSLI). Over residues 9934–9973 (TSTETTSHSPPSFTSSSTTTETPSHSTPGFSSSIATSKTI) the composition is skewed to low complexity. A compositionally biased stretch (low complexity) spans 10120–10130 (ITTTETTSHST). Positions 10131–10166 (PNITSSVTTTERTSHSTPSYTSSIATGETPSHTVPS) are enriched in polar residues. Composition is skewed to low complexity over residues 10196-10271 (HSPP…SFTS) and 10394-10421 (TSET…STPS). Residues 10750–10791 (TTTETTSHSPPRFTSSITTTKTPSDSTPVFTPSIATSETSSH) are compositionally biased toward polar residues. 3 stretches are compositionally biased toward low complexity: residues 10792-10828 (STPG…QRSP), 10887-10937 (TTET…SSIT), and 10950-11032 (PSSI…SPSS). Over residues 11278 to 11291 (TETTSHSPPHFTSS) the composition is skewed to low complexity. A compositionally biased stretch (polar residues) spans 11292 to 11317 (ITRTKTTSHRPPTFTSSITTTESPSH). The span at 11566–11682 (TTETTSHSIP…SHSTSGFTSS (117 aa)) shows a compositional bias: low complexity. Composition is skewed to polar residues over residues 11683 to 11697 (NATT…PGFS) and 11754 to 11769 (TKTT…SSIA). 2 stretches are compositionally biased toward low complexity: residues 11770 to 11779 (STKTTSHSTP) and 11818 to 11880 (SIAT…SHST). Polar residues-rich tracts occupy residues 11881–11896 (PSFT…TSHS) and 11903–11912 (LIPTTKTTLH). Low complexity-rich tracts occupy residues 11913–11949 (SPPS…HSPP) and 12067–12091 (TSSF…TSSI). Residues 12092-12103 (AVTETPSDSTPV) are compositionally biased toward polar residues. The segment covering 12280-12309 (TETTSHSAPNFSSSITSTETTSHSTPSFTS) has biased composition (low complexity). A compositionally biased stretch (polar residues) spans 12310–12323 (AITSTETTSHSTPI). The segment covering 12364-12412 (TTETTSHSTPGFASSITTTKTTSHSTPSFTSSIATSNTTSSSTPGFTSS) has biased composition (low complexity). Residues 12413–12439 (IATTETTSRSTPGFTSSIVTTETTSPH) are compositionally biased toward polar residues. The segment covering 12440–12452 (TPGFTSSITTTET) has biased composition (low complexity). Residues 12468 to 12477 (EMTSHSTPSL) show a composition bias toward polar residues. Composition is skewed to low complexity over residues 12478-12569 (TFSI…VTTP), 12624-12639 (TSTP…DIPT), 12681-12692 (SSPSIQSTETSS), 12794-12805 (QTTPSIPSLQTS), 12990-13003 (PESE…ASSS), and 13073-13086 (TSET…TPTT). The EGF-like domain occupies 13130–13163 (SGDRCQLQTRCQNGGQWDGLKCQCPSTFYGSSCE). Intrachain disulfides connect Cys13134/Cys13140 and Cys13153/Cys13162. Residues 13172–13297 (DVVETEVGME…DSIKVNNNSK (126 aa)) form the SEA domain. The helical transmembrane segment at 13381–13401 (LVGGLTAGAALLVLLLLALGV) threads the bilayer.

Post-translationally, highly O-glycosylated and probably also N-glycosylated. In terms of tissue distribution, fetal and adult small intestine and fetal and adult colon.

It localises to the membrane. Major glycoprotein component of a variety of mucus gels. Thought to provide a protective, lubricating barrier against particles and infectious agents at mucosal surfaces. The chain is Mucin-3B from Homo sapiens (Human).